The sequence spans 485 residues: N-succinylglutamate 5-semialdehyde dehydrogenase (485 aa).

220 to 225 lines the NAD(+) pocket; it reads GSANTG. Residues Glu-243 and Cys-278 contribute to the active site.

It belongs to the aldehyde dehydrogenase family. AstD subfamily.

The catalysed reaction is N-succinyl-L-glutamate 5-semialdehyde + NAD(+) + H2O = N-succinyl-L-glutamate + NADH + 2 H(+). The protein operates within amino-acid degradation; L-arginine degradation via AST pathway; L-glutamate and succinate from L-arginine: step 4/5. Its function is as follows. Catalyzes the NAD-dependent reduction of succinylglutamate semialdehyde into succinylglutamate. The sequence is that of N-succinylglutamate 5-semialdehyde dehydrogenase from Vibrio campbellii (strain ATCC BAA-1116).